The chain runs to 232 residues: Phosphatidylserine decarboxylase proenzyme (232 aa).

Serine 190 functions as the Schiff-base intermediate with substrate; via pyruvic acid in the catalytic mechanism. Position 190 is a pyruvic acid (Ser); by autocatalysis (serine 190).

It belongs to the phosphatidylserine decarboxylase family. PSD-A subfamily. In terms of assembly, heterodimer of a large membrane-associated beta subunit and a small pyruvoyl-containing alpha subunit. It depends on pyruvate as a cofactor. Is synthesized initially as an inactive proenzyme. Formation of the active enzyme involves a self-maturation process in which the active site pyruvoyl group is generated from an internal serine residue via an autocatalytic post-translational modification. Two non-identical subunits are generated from the proenzyme in this reaction, and the pyruvate is formed at the N-terminus of the alpha chain, which is derived from the carboxyl end of the proenzyme. The post-translation cleavage follows an unusual pathway, termed non-hydrolytic serinolysis, in which the side chain hydroxyl group of the serine supplies its oxygen atom to form the C-terminus of the beta chain, while the remainder of the serine residue undergoes an oxidative deamination to produce ammonia and the pyruvoyl prosthetic group on the alpha chain.

The protein resides in the cell membrane. The catalysed reaction is a 1,2-diacyl-sn-glycero-3-phospho-L-serine + H(+) = a 1,2-diacyl-sn-glycero-3-phosphoethanolamine + CO2. It participates in phospholipid metabolism; phosphatidylethanolamine biosynthesis; phosphatidylethanolamine from CDP-diacylglycerol: step 2/2. Its function is as follows. Catalyzes the formation of phosphatidylethanolamine (PtdEtn) from phosphatidylserine (PtdSer). In Brucella abortus (strain S19), this protein is Phosphatidylserine decarboxylase proenzyme.